The chain runs to 577 residues: Methionine--tRNA ligase, mitochondrial (577 aa).

The 'HIGH' region signature appears at 25 to 37 (PIFYVNAAPHIGH). Positions 329 to 333 (KMSKS) match the 'KMSKS' region motif. Lys332 lines the ATP pocket.

This sequence belongs to the class-I aminoacyl-tRNA synthetase family.

It is found in the mitochondrion matrix. The enzyme catalyses tRNA(Met) + L-methionine + ATP = L-methionyl-tRNA(Met) + AMP + diphosphate. The sequence is that of Methionine--tRNA ligase, mitochondrial (MSM1) from Candida albicans (Yeast).